A 312-amino-acid chain; its full sequence is Very-long-chain 3-oxoacyl-CoA reductase (312 aa).

A helical membrane pass occupies residues 4–24 (ALPAAGFLYWVGASTVAYLAL). 50-79 (GEWAVVTGGTDGIGKSYAEELAKRGMKIVL) contacts NADP(+). A run of 2 helical transmembrane segments spans residues 182 to 202 (GAIL…LTIY) and 271 to 291 (GYPI…WLYF). Position 189 (S189) interacts with substrate. Residue Y202 is the Proton acceptor of the active site. The Di-lysine motif signature appears at 308-312 (KMKMN).

The protein belongs to the short-chain dehydrogenases/reductases (SDR) family. 17-beta-HSD 3 subfamily.

It localises to the endoplasmic reticulum membrane. The enzyme catalyses a very-long-chain (3R)-3-hydroxyacyl-CoA + NADP(+) = a very-long-chain 3-oxoacyl-CoA + NADPH + H(+). The catalysed reaction is 17beta-estradiol + NAD(+) = estrone + NADH + H(+). It catalyses the reaction 17beta-estradiol + NADP(+) = estrone + NADPH + H(+). It carries out the reaction 3-oxooctadecanoyl-CoA + NADPH + H(+) = (3R)-hydroxyoctadecanoyl-CoA + NADP(+). The enzyme catalyses (7Z,10Z,13Z,16Z)-3-oxodocosatetraenoyl-CoA + NADPH + H(+) = (3R)-hydroxy-(7Z,10Z,13Z,16Z)-docosatetraenoyl-CoA + NADP(+). The catalysed reaction is 3-oxo-(7Z,10Z,13Z,16Z,19Z)-docosapentaenoyl-CoA + NADPH + H(+) = (3R)-hydroxy-(7Z,10Z,13Z,16Z,19Z)-docosapentaenoyl-CoA + NADP(+). It catalyses the reaction (8Z,11Z,14Z)-3-oxoeicosatrienoyl-CoA + NADPH + H(+) = (3R)-hydroxy-(8Z,11Z,14Z)-eicosatrienoyl-CoA + NADP(+). The protein operates within lipid metabolism; fatty acid biosynthesis. Its pathway is steroid biosynthesis; estrogen biosynthesis. Catalyzes the second of the four reactions of the long-chain fatty acids elongation cycle. This endoplasmic reticulum-bound enzymatic process, allows the addition of two carbons to the chain of long- and very long-chain fatty acids/VLCFAs per cycle. This enzyme has a 3-ketoacyl-CoA reductase activity, reducing 3-ketoacyl-CoA to 3-hydroxyacyl-CoA, within each cycle of fatty acid elongation. Thereby, it may participate in the production of VLCFAs of different chain lengths that are involved in multiple biological processes as precursors of membrane lipids and lipid mediators. May also catalyze the transformation of estrone (E1) into estradiol (E2) and play a role in estrogen formation. In Bos taurus (Bovine), this protein is Very-long-chain 3-oxoacyl-CoA reductase (HSD17B12).